Here is a 242-residue protein sequence, read N- to C-terminus: MSKSRLTVFSFVRRFLLRLMVVLAVFWGGGIALFSVAPVPFSAVMVERQVSAWLHGNFRYVAHSDWVSMDQISPWMGLAVIAAEDQKFPEHWGFDVASIEKALAHNERNENRIRGASTISQQTAKNLFLWDGRSWVRKGLEAGLTLGIETVWSKKRILTVYLNIAEFGDGVFGVEAAAQRYFHKPASKLTRSEAALLAAVLPNPRRFKVSAPSGYVHSRQAWILRQMYQLGGEPFMQQHQLD.

A helical transmembrane segment spans residues leucine 19–valine 39.

This sequence belongs to the glycosyltransferase 51 family.

The protein resides in the cell inner membrane. The enzyme catalyses [GlcNAc-(1-&gt;4)-Mur2Ac(oyl-L-Ala-gamma-D-Glu-L-Lys-D-Ala-D-Ala)](n)-di-trans,octa-cis-undecaprenyl diphosphate + beta-D-GlcNAc-(1-&gt;4)-Mur2Ac(oyl-L-Ala-gamma-D-Glu-L-Lys-D-Ala-D-Ala)-di-trans,octa-cis-undecaprenyl diphosphate = [GlcNAc-(1-&gt;4)-Mur2Ac(oyl-L-Ala-gamma-D-Glu-L-Lys-D-Ala-D-Ala)](n+1)-di-trans,octa-cis-undecaprenyl diphosphate + di-trans,octa-cis-undecaprenyl diphosphate + H(+). It functions in the pathway cell wall biogenesis; peptidoglycan biosynthesis. In terms of biological role, peptidoglycan polymerase that catalyzes glycan chain elongation from lipid-linked precursors. The polypeptide is Biosynthetic peptidoglycan transglycosylase (Escherichia coli (strain ATCC 8739 / DSM 1576 / NBRC 3972 / NCIMB 8545 / WDCM 00012 / Crooks)).